Consider the following 304-residue polypeptide: Sperm microtubule inner protein 6 (304 aa).

Belongs to the SPMIP6 family. In terms of assembly, microtubule inner protein component of sperm flagellar doublet microtubules. Interacts with alpha-tubulin.

Its subcellular location is the cytoplasm. It localises to the cytoskeleton. The protein resides in the nucleus. The protein localises to the mitochondrion. It is found in the flagellum axoneme. May participate in intramanchette transport and midpiece formation of the sperm tail. May play a potential role in somatic cell proliferation. The sequence is that of Sperm microtubule inner protein 6 (SPMIP6) from Bos taurus (Bovine).